The following is a 555-amino-acid chain: Alpha-copaene synthase (555 aa).

Asp312, Asp316, Asp452, Ser456, and Glu460 together coordinate Mg(2+). The short motif at 312 to 316 (DDTYD) is the DDXXD motif element.

The protein belongs to the terpene synthase family. It depends on Mg(2+) as a cofactor. As to expression, mainly expressed in sunflower trichomes.

It carries out the reaction (2E,6E)-farnesyl diphosphate = alpha-copaene + diphosphate. It catalyses the reaction (2E,6E)-farnesyl diphosphate = alpha-muurolene + diphosphate. The catalysed reaction is (2E,6E)-farnesyl diphosphate = alpha-humulene + diphosphate. Its pathway is secondary metabolite biosynthesis; terpenoid biosynthesis. In terms of biological role, involved in the biosynthesis of germacrene-derived sesquiterpene lactones. Catalyzes the cyclization of farnesyl diphosphate to alpha-copaene, delta-cadinene, alpha-muurolene, beta-caryophyllene and alpha-humulene. In Helianthus annuus (Common sunflower), this protein is Alpha-copaene synthase (CS).